The primary structure comprises 118 residues: MPRVKRGVTARARHKKVIDAAKGYRGRRNNVYRIAKQAVMRAGQYAYRDRRNKKRVFRALWIARINAGAREHGLSYSKFMNGLKKASIELDRKVLSDMAIHDKVAFAAIVNQVKANVA.

This sequence belongs to the bacterial ribosomal protein bL20 family.

Functionally, binds directly to 23S ribosomal RNA and is necessary for the in vitro assembly process of the 50S ribosomal subunit. It is not involved in the protein synthesizing functions of that subunit. The protein is Large ribosomal subunit protein bL20 of Ralstonia nicotianae (strain ATCC BAA-1114 / GMI1000) (Ralstonia solanacearum).